A 573-amino-acid chain; its full sequence is Solute carrier family 41 member 2 (573 aa).

The Extracellular portion of the chain corresponds to 1 to 162 (MTNCKGRSTI…KESSSIMALQ (162 aa)). A helical membrane pass occupies residues 163–183 (ILVPFLLAGFGTVTAGMVLDI). At 184–195 (VQHWDVFKNVTE) the chain is on the cytoplasmic side. The helical transmembrane segment at 196 to 216 (VFILVPALLGLKGNLEMTLAS) threads the bilayer. The Extracellular segment spans residues 217–245 (RLSTAVNIGKMDSPIEKWNLIIGNLALKQ). A helical membrane pass occupies residues 246 to 266 (VQATVVGFLAAVAAVILGWIP). Residues 267–282 (EGKYSFSHSILLCSSS) lie on the Cytoplasmic side of the membrane. The chain crosses the membrane as a helical span at residues 283–303 (VATAFIASLLQGIIMVGVIVG). At 304–313 (SKKTGINPDN) the chain is on the extracellular side. Residues 314 to 334 (VATPIAASFGDLITLAILAWI) form a helical membrane-spanning segment. The Cytoplasmic segment spans residues 335 to 347 (SQGLYTCLETYYY). The chain crosses the membrane as a helical span at residues 348–368 (VSPLVGAFFLALTPMGIVIAA). Residues 369 to 376 (KHPATRTV) are Extracellular-facing. The helical transmembrane segment at 377–397 (LHSGWEPVITAMIISSIGGLI) threads the bilayer. The Cytoplasmic portion of the chain corresponds to 398 to 406 (LDTTVSDPN). Residues 407 to 427 (LVGIVVYTPVINGIGGNLVAI) traverse the membrane as a helical segment. The Extracellular portion of the chain corresponds to 428–469 (QASRISTYLHLHSIPGELPEEAKGCYYPCRTYYGTGVNNKSA). The helical transmembrane segment at 470-490 (QVLLLLVIPGHLIFLYTIHLM) threads the bilayer. Topologically, residues 491-499 (KSGHTSLTP) are cytoplasmic. The helical transmembrane segment at 500–520 (IFIAVYLFAALLQVFTLLWIA) threads the bilayer. The Extracellular portion of the chain corresponds to 521 to 543 (DWMVHHFWKKGKDPDSFSIPYLT). Residues 544–564 (ALGDLLGTALLAVGFHFLWLI) traverse the membrane as a helical segment. At 565–573 (GDRDGDVGD) the chain is on the cytoplasmic side.

This sequence belongs to the SLC41A transporter family.

Its subcellular location is the cell membrane. It carries out the reaction Mg(2+)(in) = Mg(2+)(out). The enzyme catalyses Mn(2+)(in) = Mn(2+)(out). The catalysed reaction is Co(2+)(in) = Co(2+)(out). It catalyses the reaction Ni(2+)(in) = Ni(2+)(out). It carries out the reaction Fe(2+)(in) = Fe(2+)(out). Functionally, acts as a plasma-membrane magnesium transporter. Can also mediate the transport of other divalent metal cations in an order of Ba(2+) &gt; Ni(2+) &gt; Co(2+) &gt; Fe(2+) &gt; Mn(2+). The polypeptide is Solute carrier family 41 member 2 (SLC41A2) (Gallus gallus (Chicken)).